The sequence spans 1100 residues: cGMP-inhibited 3',5'-cyclic phosphodiesterase 3B (1100 aa).

The span at 1 to 11 (MRKDERERDAP) shows a compositional bias: basic and acidic residues. The interaction with RAPGEF3 stretch occupies residues 1-28 (MRKDERERDAPAMRSPPPPPASAASPPE). The segment at 1-29 (MRKDERERDAPAMRSPPPPPASAASPPES) is disordered. Serine 15 is modified (phosphoserine). A run of 6 helical transmembrane segments spans residues 69–89 (AGAR…LLGA), 110–130 (LSLS…CFLT), 140–160 (AGSW…FAAW), 170–190 (PAAA…TLAP), 198–218 (VLVL…LGAL), and 225–245 (LLSC…DHFF). Position 273 is a phosphoserine; by PKB/AKT1 or PKB/AKT2 (serine 273). Residues serine 274 and serine 421 each carry the phosphoserine modification. Disordered regions lie at residues 400 to 423 (RKLH…SSGA) and 570 to 590 (EPDG…SVFS). Positions 408–423 (GRTSFPTPQLRRSSGA) are enriched in polar residues. Residues 415-439 (PQLRRSSGASSLLTNEHCSRWDRSS) are interaction with PIK3R6. The segment covering 573-583 (GTDHPSEKSGE) has biased composition (basic and acidic residues). Residues 627–1061 (PNIDQEVSLD…KIWKEIIEEE (435 aa)) enclose the PDEase domain. The active-site Proton donor is histidine 713. Histidine 713 provides a ligand contact to AMP. The Mg(2+) site is built by histidine 717, histidine 797, aspartate 798, and aspartate 913. AMP-binding residues include aspartate 798, aspartate 913, and glutamine 964. A compositionally biased stretch (acidic residues) spans 993-1024 (EEGDDTESDDDDDDDDGDGGEELDSDDEETED). The disordered stretch occupies residues 993–1033 (EEGDDTESDDDDDDDDGDGGEELDSDDEETEDNLNPKPQRR). Residues 1044 to 1079 (MHHLTENHKIWKEIIEEEEEKCKAEGNKLQVDNASL) are a coiled coil.

It belongs to the cyclic nucleotide phosphodiesterase family. PDE3 subfamily. As to quaternary structure, homodimer. Interacts with PIK3CG; regulates PDE3B activity and thereby cAMP levels in cells. Interacts with RAPGEF3 and PIK3R6; form a signaling complex that regulates phosphatidylinositol 3-kinase gamma in angiogenesis. Interacts with ABHD15; this interaction regulates PDE3B's stability and expression and, thereby, impacts the antilipolytic action of insulin. Mg(2+) is required as a cofactor. Requires Mn(2+) as cofactor. In terms of processing, phosphorylation at Ser-273 mediates insulin-induced activation of PDE3B. Abundant in adipose tissues.

The protein resides in the membrane. The enzyme catalyses a nucleoside 3',5'-cyclic phosphate + H2O = a nucleoside 5'-phosphate + H(+). The catalysed reaction is 3',5'-cyclic AMP + H2O = AMP + H(+). It carries out the reaction 3',5'-cyclic GMP + H2O = GMP + H(+). Its activity is regulated as follows. Inhibited by cGMP. Its function is as follows. Cyclic nucleotide phosphodiesterase with a dual-specificity for the second messengers cAMP and cGMP, which are key regulators of many important physiological processes. Regulates angiogenesis by inhibiting the cAMP-dependent guanine nucleotide exchange factor RAPGEF3 and downstream phosphatidylinositol 3-kinase gamma-mediated signaling. Controls cardiac contractility by reducing cAMP concentration in cardiocytes. This Mus musculus (Mouse) protein is cGMP-inhibited 3',5'-cyclic phosphodiesterase 3B.